Consider the following 374-residue polypeptide: Glutamate 5-kinase (374 aa).

K9 contacts ATP. Substrate is bound by residues S49, D136, and N148. ATP is bound by residues 168-169 and 210-216; these read TD and TGGMRSK. Residues 276–354 enclose the PUA domain; it reads AGMITVDSGA…EEARQYSYLH (79 aa).

This sequence belongs to the glutamate 5-kinase family.

It is found in the cytoplasm. It catalyses the reaction L-glutamate + ATP = L-glutamyl 5-phosphate + ADP. The protein operates within amino-acid biosynthesis; L-proline biosynthesis; L-glutamate 5-semialdehyde from L-glutamate: step 1/2. Catalyzes the transfer of a phosphate group to glutamate to form L-glutamate 5-phosphate. The chain is Glutamate 5-kinase from Geobacillus kaustophilus (strain HTA426).